The sequence spans 258 residues: Phosphoribosylaminoimidazole-succinocarboxamide synthase (258 aa).

Belongs to the SAICAR synthetase family.

It catalyses the reaction 5-amino-1-(5-phospho-D-ribosyl)imidazole-4-carboxylate + L-aspartate + ATP = (2S)-2-[5-amino-1-(5-phospho-beta-D-ribosyl)imidazole-4-carboxamido]succinate + ADP + phosphate + 2 H(+). The protein operates within purine metabolism; IMP biosynthesis via de novo pathway; 5-amino-1-(5-phospho-D-ribosyl)imidazole-4-carboxamide from 5-amino-1-(5-phospho-D-ribosyl)imidazole-4-carboxylate: step 1/2. The protein is Phosphoribosylaminoimidazole-succinocarboxamide synthase of Maricaulis maris (strain MCS10) (Caulobacter maris).